A 401-amino-acid chain; its full sequence is O-antigen ligase (401 aa).

The Cytoplasmic segment spans residues 1–20 (MFAATRLSRLRHDTSRILSH). The chain crosses the membrane as a helical span at residues 21 to 37 (WILPLGWLALLTGMFWV). The Periplasmic segment spans residues 38-42 (GDRSD). Residues 43–61 (YHRLFYILLAAPTLLYVIL) traverse the membrane as a helical segment. Topologically, residues 62–72 (QPRLLRPLTGS) are cytoplasmic. Residues 73 to 92 (PLFIAFLAFSSYMMLSLSWS) form a helical membrane-spanning segment. Residues 93–103 (TPENSTGSLLK) lie on the Periplasmic side of the membrane. A helical membrane pass occupies residues 104–122 (RPLYIALLFFCAAILALEA). Over 123–129 (PLRLKTA) the chain is Cytoplasmic. Residues 130–150 (TWLAALGAVISAAATLLRYYW) traverse the membrane as a helical segment. Residues 151–161 (DANPLRLTGYG) are Periplasmic-facing. Residues 162–183 (ALYNPLLSAHVYGAFTALWLAY) traverse the membrane as a helical segment. The Cytoplasmic portion of the chain corresponds to 184 to 189 (WMQSRP). The chain crosses the membrane as a helical span at residues 190 to 208 (ILAPLPLISLALLGGLLIA). Topologically, residues 209–212 (TGSR) are periplasmic. The chain crosses the membrane as a helical span at residues 213-229 (TPLVGLTAALMWLVLAG). Topologically, residues 230 to 234 (DRKKA) are cytoplasmic. Residues 235–252 (LIALALALAGALLGYILY) form a helical membrane-spanning segment. Residues 253 to 306 (PEVITQRGASFRPEIWADALRQISEHPWLGHGYDHPMRIVLSNGMLLADPHNIE) are Periplasmic-facing. Residues 258–319 (QRGASFRPEI…LFAGGIIGLL (62 aa)) form a WZY-C region. The helical transmembrane segment at 307–331 (LGVLFAGGIIGLLLWVAIYALAFGF) threads the bilayer. The Cytoplasmic segment spans residues 332-339 (SWKNRKSP). Residues 340–357 (AVLLASTWLVFGLAAGLT) form a helical membrane-spanning segment. Topologically, residues 358–368 (EGNAFLPRPKE) are periplasmic. A helical transmembrane segment spans residues 369–385 (HWFLIWIPMALLYALWI). The Cytoplasmic portion of the chain corresponds to 386-401 (QQRFAASRRGEDIAAP).

This sequence belongs to the O-antigen ligase family. In terms of assembly, homodimer.

The protein resides in the cell inner membrane. It carries out the reaction a lipid-linked O antigen + a lipid A-core oligosaccharide = a lipopolysaccharide + a polyisoprenyl diphosphate.. It functions in the pathway bacterial outer membrane biogenesis; lipopolysaccharide biosynthesis. Its activity is regulated as follows. Activity does not require ATP and magnesium ions. Functionally, transferase involved in the biosynthesis of the lipopolysaccharide (LPS). Catalyzes the transfer of a polymerized O-antigen molecule from its polyprenyl diphosphate membrane anchor to a terminal sugar of the lipid A-core oligosaccharide, finalizing the biosynthesis of the lipopolysaccharide. Required for the attachment of both A-band and B-band O-antigens, two forms of O-antigen produced by P.aeruginosa, onto the lipid A-core receptors. Important for cell wall integrity and motility of the bacteria. The polypeptide is O-antigen ligase (Pseudomonas aeruginosa (strain ATCC 15692 / DSM 22644 / CIP 104116 / JCM 14847 / LMG 12228 / 1C / PRS 101 / PAO1)).